The chain runs to 300 residues: NAD kinase (300 aa).

Asp-75 (proton acceptor) is an active-site residue. NAD(+)-binding positions include 75–76 (DG), 149–150 (ND), Arg-177, Asp-179, 190–195 (TAYALS), Ala-214, and Gln-248.

It belongs to the NAD kinase family. The cofactor is a divalent metal cation.

The protein resides in the cytoplasm. It catalyses the reaction NAD(+) + ATP = ADP + NADP(+) + H(+). Functionally, involved in the regulation of the intracellular balance of NAD and NADP, and is a key enzyme in the biosynthesis of NADP. Catalyzes specifically the phosphorylation on 2'-hydroxyl of the adenosine moiety of NAD to yield NADP. The protein is NAD kinase of Burkholderia multivorans (strain ATCC 17616 / 249).